The following is a 602-amino-acid chain: Elongation factor 4 (602 aa).

Residues 8–190 form the tr-type G domain; it reads DLIRNFSIVA…AIVHRLPPPK (183 aa). Residues 20–25 and 137–140 each bind GTP; these read DHGKST and NKID.

Belongs to the TRAFAC class translation factor GTPase superfamily. Classic translation factor GTPase family. LepA subfamily.

It localises to the cell inner membrane. It catalyses the reaction GTP + H2O = GDP + phosphate + H(+). Its function is as follows. Required for accurate and efficient protein synthesis under certain stress conditions. May act as a fidelity factor of the translation reaction, by catalyzing a one-codon backward translocation of tRNAs on improperly translocated ribosomes. Back-translocation proceeds from a post-translocation (POST) complex to a pre-translocation (PRE) complex, thus giving elongation factor G a second chance to translocate the tRNAs correctly. Binds to ribosomes in a GTP-dependent manner. In Cereibacter sphaeroides (strain ATCC 17023 / DSM 158 / JCM 6121 / CCUG 31486 / LMG 2827 / NBRC 12203 / NCIMB 8253 / ATH 2.4.1.) (Rhodobacter sphaeroides), this protein is Elongation factor 4.